The chain runs to 441 residues: tRNA(Ile)-lysidine synthase (441 aa).

ATP is bound at residue 28 to 33 (SGGTDS).

This sequence belongs to the tRNA(Ile)-lysidine synthase family.

Its subcellular location is the cytoplasm. The enzyme catalyses cytidine(34) in tRNA(Ile2) + L-lysine + ATP = lysidine(34) in tRNA(Ile2) + AMP + diphosphate + H(+). In terms of biological role, ligates lysine onto the cytidine present at position 34 of the AUA codon-specific tRNA(Ile) that contains the anticodon CAU, in an ATP-dependent manner. Cytidine is converted to lysidine, thus changing the amino acid specificity of the tRNA from methionine to isoleucine. The chain is tRNA(Ile)-lysidine synthase from Orientia tsutsugamushi (strain Boryong) (Rickettsia tsutsugamushi).